A 407-amino-acid chain; its full sequence is 41 kDa spicule matrix protein (407 aa).

An N-terminal signal peptide occupies residues 1–17 (MKGVLFIVASLVAFATG). Positions 29-160 (SGQSCYRYFN…PGRAPVMKRQ (132 aa)) constitute a C-type lectin domain. Disordered stretches follow at residues 143–176 (PQNPMSGPPGRAPVMKRQNPPVRPGQGGRQIPQG) and 204–407 (IGQQ…DALA). Residues 223-369 (NQPGMGGRQP…MGGRQPGMGG (147 aa)) show a composition bias toward gly residues. Low complexity predominate over residues 370–398 (QQPNNPNNPNNPNNPNNPNNPNPRFNRPR).

The protein belongs to the SM50 family. In terms of tissue distribution, expressed specifically in the micromere/primary mesenchyme cells (PMC) lineage.

It localises to the secreted. In terms of biological role, major matrix protein of the sea urchin embryo spicule which directs crystal growth in certain orientations and inhibit growth in others. The protein is 41 kDa spicule matrix protein of Hemicentrotus pulcherrimus (Sea urchin).